The sequence spans 28 residues: MCICKNGKPLPGFIGKICRKICMMQQTH.

Intrachain disulfides connect C2/C18 and C4/C22.

In terms of tissue distribution, expressed by the venom gland.

The protein resides in the secreted. Functionally, mast cell degranulating peptide. The polypeptide is Mast cell degranulating peptide (Bombus pensylvanicus (American bumblebee)).